The sequence spans 99 residues: uncharacterized protein (99 aa).

Residues 76–96 (VLLGLASGMIGGIIGMFMWVL) form a helical membrane-spanning segment.

It localises to the host membrane. This is an uncharacterized protein from Haemophilus phage HP1 (strain HP1c1) (Bacteriophage HP1).